The chain runs to 132 residues: Small ribosomal subunit protein uS8 (132 aa).

Belongs to the universal ribosomal protein uS8 family. Part of the 30S ribosomal subunit. Contacts proteins S5 and S12.

In terms of biological role, one of the primary rRNA binding proteins, it binds directly to 16S rRNA central domain where it helps coordinate assembly of the platform of the 30S subunit. This Lysinibacillus sphaericus (strain C3-41) protein is Small ribosomal subunit protein uS8.